Reading from the N-terminus, the 817-residue chain is MEEFLDKLPQMDLMRSEKMTLVQLIIPVESAHRSITYLGELGLLQFRDLNADKSPFQRTFANQVKRCGEMSRKLRFFKDQIDKAGLRCSPRLEIEPDIALGDLERQLADHEHEVLEMNSNSEKLRQTYNELLEFKIVLEKASGFLVSSNTHAIGEEIELHESTYSNNGFIETASLLEQEMNPGHSNQSGLRFISGIINKDKLLKFERMLFRATRGNMLFNQTTSDEEIMDPSTSEMVEKVVFVVFFSGEQARTKILKICEAFGANCYPVPEDTTKQRQLTREVLSRLSDLEATLDAGTRHRNNALNSVGYSLTNWITTVRREKAVYDTLNMLNFDVTKKCLVGEGWCPTFAKTQIHEVLQRATFDSSSQVGVIFHVMQAVESPPTYFRTNKLTNAFQEIIDAYGVARYQEANPAVYSVVTYPFLFAVMFGDWGHGLCLLLGALYLLARERKLSTQKLGSFMEMLFGGRYVILLMALFSIYCGLIYNEFFSVPFHIFGGSAYKCRDTTCSDAYTVGLIKYRDPYPFGVDPSWRGSRTELPYLNSLKMKMSILLGIAQMNLGLILSFFNARFFGSSLDIRYQFIPQMIFLNSLFGYLSLLIIIKWCTGSQADLYHVMIYMFLSPTEELGENELFWGQRPLQIVLLLLAFIAVPWMLFPKPFALRKIHMERFQGRTYGVLVSSEVDLDVEPDSARGGGHHEEEFNFSEIFVHQLIHSIEFVLGSVSNTASYLRLWALSLAHSELSTVFYEKVLLLAWGYENILIRLIGVAVFAFATAFILLMMETLSAFLHALRLHWVEFMGKFFNGDGYKFKPFSFALI.

Over Met-1–Pro-422 the chain is Cytoplasmic. Residues Asp-97–Glu-133 are a coiled coil. A helical membrane pass occupies residues Phe-423–Leu-443. Residues Tyr-444–Arg-468 are Vacuolar-facing. The helical transmembrane segment at Tyr-469–Phe-489 threads the bilayer. The Cytoplasmic portion of the chain corresponds to Ser-490 to Lys-547. The chain crosses the membrane as a helical span at residues Met-548–Ala-568. Topologically, residues Arg-569–Gln-580 are vacuolar. Residues Phe-581 to Ile-601 form a helical membrane-spanning segment. Residues Lys-602–Gln-639 lie on the Cytoplasmic side of the membrane. The chain crosses the membrane as a helical span at residues Ile-640–Ala-660. At Leu-661 to Asn-758 the chain is on the vacuolar side. A helical transmembrane segment spans residues Ile-759–Met-779. At Met-780 to Ile-817 the chain is on the cytoplasmic side.

It belongs to the V-ATPase 116 kDa subunit family. In terms of assembly, V-ATPase is a heteromultimeric enzyme composed of a peripheral catalytic V1 complex (components A to H) attached to an integral membrane V0 proton pore complex (components: a, c, c'', d and e).

It is found in the vacuole membrane. The protein localises to the golgi apparatus. It localises to the trans-Golgi network membrane. Its function is as follows. Essential component of the vacuolar proton pump (V-ATPase), a multimeric enzyme that catalyzes the translocation of protons across the membranes. Required for assembly and activity of the V-ATPase. Required during cell expansion. In Arabidopsis thaliana (Mouse-ear cress), this protein is V-type proton ATPase subunit a1.